The sequence spans 104 residues: Large ribosomal subunit protein bL21 (104 aa).

Belongs to the bacterial ribosomal protein bL21 family. As to quaternary structure, part of the 50S ribosomal subunit. Contacts protein L20.

Its function is as follows. This protein binds to 23S rRNA in the presence of protein L20. The protein is Large ribosomal subunit protein bL21 of Kosmotoga olearia (strain ATCC BAA-1733 / DSM 21960 / TBF 19.5.1).